We begin with the raw amino-acid sequence, 377 residues long: Succinyl-diaminopimelate desuccinylase (377 aa).

Residue His67 coordinates Zn(2+). Asp69 is a catalytic residue. Zn(2+) is bound at residue Asp100. Glu134 (proton acceptor) is an active-site residue. Zn(2+) is bound by residues Glu135, Glu163, and His349.

This sequence belongs to the peptidase M20A family. DapE subfamily. Homodimer. Requires Zn(2+) as cofactor. It depends on Co(2+) as a cofactor.

The enzyme catalyses N-succinyl-(2S,6S)-2,6-diaminopimelate + H2O = (2S,6S)-2,6-diaminopimelate + succinate. It participates in amino-acid biosynthesis; L-lysine biosynthesis via DAP pathway; LL-2,6-diaminopimelate from (S)-tetrahydrodipicolinate (succinylase route): step 3/3. Catalyzes the hydrolysis of N-succinyl-L,L-diaminopimelic acid (SDAP), forming succinate and LL-2,6-diaminopimelate (DAP), an intermediate involved in the bacterial biosynthesis of lysine and meso-diaminopimelic acid, an essential component of bacterial cell walls. In Actinobacillus pleuropneumoniae serotype 3 (strain JL03), this protein is Succinyl-diaminopimelate desuccinylase.